A 362-amino-acid polypeptide reads, in one-letter code: Chorismate synthase (362 aa).

An NADP(+)-binding site is contributed by Arg-47. FMN-binding positions include 124 to 126 (RSS), Gly-286, 301 to 305 (KPTAT), and Arg-327.

The protein belongs to the chorismate synthase family. Homotetramer. Requires FMNH2 as cofactor.

It catalyses the reaction 5-O-(1-carboxyvinyl)-3-phosphoshikimate = chorismate + phosphate. The protein operates within metabolic intermediate biosynthesis; chorismate biosynthesis; chorismate from D-erythrose 4-phosphate and phosphoenolpyruvate: step 7/7. Catalyzes the anti-1,4-elimination of the C-3 phosphate and the C-6 proR hydrogen from 5-enolpyruvylshikimate-3-phosphate (EPSP) to yield chorismate, which is the branch point compound that serves as the starting substrate for the three terminal pathways of aromatic amino acid biosynthesis. This reaction introduces a second double bond into the aromatic ring system. This Synechococcus sp. (strain ATCC 27144 / PCC 6301 / SAUG 1402/1) (Anacystis nidulans) protein is Chorismate synthase.